The sequence spans 246 residues: DNA-directed RNA polymerase subunit alpha (246 aa).

It belongs to the RNA polymerase alpha chain family. In terms of assembly, in plastids the minimal PEP RNA polymerase catalytic core is composed of four subunits: alpha, beta, beta', and beta''. When a (nuclear-encoded) sigma factor is associated with the core the holoenzyme is formed, which can initiate transcription (Potential).

It is found in the plastid. It carries out the reaction RNA(n) + a ribonucleoside 5'-triphosphate = RNA(n+1) + diphosphate. Functionally, DNA-dependent RNA polymerase catalyzes the transcription of DNA into RNA using the four ribonucleoside triphosphates as substrates. The polypeptide is DNA-directed RNA polymerase subunit alpha (rpoA) (Helicosporidium sp. subsp. Simulium jonesii (Green alga)).